The primary structure comprises 338 residues: Ketol-acid reductoisomerase (NADP(+)) (338 aa).

A KARI N-terminal Rossmann domain is found at 1–181 (MKVFYDKDCD…GGGRTGIIET (181 aa)). Residues 24-27 (YGSQ), Arg47, Ser50, Thr52, and 82-85 (DEFQ) contribute to the NADP(+) site. His107 is a catalytic residue. Position 133 (Gly133) interacts with NADP(+). Residues 182–327 (TFKDETETDL…EQLRSMMPWI (146 aa)) form the KARI C-terminal knotted domain. Mg(2+) contacts are provided by Asp190, Glu194, Glu226, and Glu230. Position 251 (Ser251) interacts with substrate.

This sequence belongs to the ketol-acid reductoisomerase family. Requires Mg(2+) as cofactor.

It carries out the reaction (2R)-2,3-dihydroxy-3-methylbutanoate + NADP(+) = (2S)-2-acetolactate + NADPH + H(+). The catalysed reaction is (2R,3R)-2,3-dihydroxy-3-methylpentanoate + NADP(+) = (S)-2-ethyl-2-hydroxy-3-oxobutanoate + NADPH + H(+). It functions in the pathway amino-acid biosynthesis; L-isoleucine biosynthesis; L-isoleucine from 2-oxobutanoate: step 2/4. Its pathway is amino-acid biosynthesis; L-valine biosynthesis; L-valine from pyruvate: step 2/4. Functionally, involved in the biosynthesis of branched-chain amino acids (BCAA). Catalyzes an alkyl-migration followed by a ketol-acid reduction of (S)-2-acetolactate (S2AL) to yield (R)-2,3-dihydroxy-isovalerate. In the isomerase reaction, S2AL is rearranged via a Mg-dependent methyl migration to produce 3-hydroxy-3-methyl-2-ketobutyrate (HMKB). In the reductase reaction, this 2-ketoacid undergoes a metal-dependent reduction by NADPH to yield (R)-2,3-dihydroxy-isovalerate. This is Ketol-acid reductoisomerase (NADP(+)) from Pseudomonas putida (strain ATCC 700007 / DSM 6899 / JCM 31910 / BCRC 17059 / LMG 24140 / F1).